The primary structure comprises 70 residues: UPF0337 protein BT9727_3385 (70 aa).

This sequence belongs to the UPF0337 (CsbD) family.

This chain is UPF0337 protein BT9727_3385, found in Bacillus thuringiensis subsp. konkukian (strain 97-27).